The chain runs to 383 residues: Dihydroorotase (383 aa).

Residues His-47 and His-49 each coordinate Zn(2+). Substrate-binding positions include 49–51 and Asn-81; that span reads HFR. Zn(2+)-binding residues include Lys-128, His-159, His-198, and Asp-264. An N6-carboxylysine modification is found at Lys-128. The active site involves Asp-264. Substrate is bound by residues His-268 and 280-281; that span reads PG.

It belongs to the metallo-dependent hydrolases superfamily. DHOase family. Class I DHOase subfamily. It depends on Zn(2+) as a cofactor.

The catalysed reaction is (S)-dihydroorotate + H2O = N-carbamoyl-L-aspartate + H(+). It functions in the pathway pyrimidine metabolism; UMP biosynthesis via de novo pathway; (S)-dihydroorotate from bicarbonate: step 3/3. Catalyzes the reversible cyclization of carbamoyl aspartate to dihydroorotate. The sequence is that of Dihydroorotase from Pyrobaculum aerophilum (strain ATCC 51768 / DSM 7523 / JCM 9630 / CIP 104966 / NBRC 100827 / IM2).